A 358-amino-acid chain; its full sequence is Myb family transcription factor IPN2 (358 aa).

Residues 1 to 20 are disordered; the sequence is MERMFPPKKPSTMNSHDRPM. The HTH myb-type domain occupies 32-92; the sequence is TDPKPRLRWT…HLQKFRLGKQ (61 aa). The H-T-H motif DNA-binding region spans 63 to 88; it reads PKTIMRVMGVKGLTLYHLKSHLQKFR. Residues 127-171 are a coiled coil; that stretch reads NMNEMQIEVQRRLHEQLEVQKHLQLRIEAQGKYMQSILEKAYQTL. Residues 139 to 144 carry the LHEQLE motif; sequence LHEQLE. The disordered stretch occupies residues 310–358; that stretch reads IYDSKPEEKKFDASMKLERPSPRRAPLGERMSPMITTGTMAQGRSSPFG. The segment covering 311-330 has biased composition (basic and acidic residues); the sequence is YDSKPEEKKFDASMKLERPS. The span at 343–358 shows a compositional bias: polar residues; sequence MITTGTMAQGRSSPFG.

The protein belongs to the MYB-CC family. As to quaternary structure, interacts with NSP2. In terms of tissue distribution, expressed in leaves, stems, nodules and roots.

The protein localises to the nucleus. In terms of biological role, transcriptional regulator required for Nod-factor-induced gene expression. Transcription activator involved in the induction of NIN and ENOD40 genes, which are required for rhizobial infection and early nodule development. Possesses strong transactivation activity in vitro. Does not seem to contribute to the early steps of the arbuscular mycorrhizal fungus infection and colonization processes in roots. This Lotus japonicus (Lotus corniculatus var. japonicus) protein is Myb family transcription factor IPN2.